The chain runs to 701 residues: MATYKVKVATGTDFFSGTLDSISLTIVGTQGESHKQRLNHFGRDFATGAVDDYTVQCQQDLGELIIIRLHKEPHSFLPKDPWYCNYVQICAPNCRVYHFPAYQWMDGYETLSLREATGKTTADDTLPILLEHRQEEIRAKKDFYHWRVFVPGLPNYVDIPSYHPPPRRCRNPNRPEWNGYIPGFPILINIKATRFLNLNLRFSFVKTASFFYRLGPMALAFKLRGLVDRKRSWKRLKDIKNIFPATKTVVSEYVAEHWTEDSFFGYQYLNGINPGHIRRCMQIPDKFPVTDEMVAPFLGEGTCLQAELEKGNIYLADYRILDGIPTVELNGQKQHHCAPICLLHFGPDGNMMPIAIQLSQTPGPDCPIFLPNDSEWDWLLAKTWVRYAEFYSHEAVAHLLESHLIGEAFCLALLRNLPMCHPLYKLLIPHTRYNVQINSIGRALLLNKGGLSARAMSLGLEGFAQVMVRGLSELTYKSLCIPNDFVERGVQDLPGYYFRDDSLAVWYAMERYVTEIITYYYPNDAAVEGDPELQCWVQEIFKECLLERESSGFPTCLRTVPELIEYVTMVMYTCSARHAAVNTGQLEYTSWMPNFPSSMRNPPMQSKGLTTLQTFMDTLPDVKTTCIVLLVLWTLCREPDDRRPLGHFPDIHFVEEAPRRSMEAFRQNLNQISHNIRQRNKCLNLPYYYLDPVLIENSISI.

The region spanning 2–119 is the PLAT domain; it reads ATYKVKVATG…TLSLREATGK (118 aa). In terms of domain architecture, Lipoxygenase spans 120–701; it reads TTADDTLPIL…PVLIENSISI (582 aa). Fe cation contacts are provided by H398, H403, H578, N582, and I701.

It belongs to the lipoxygenase family. Fe cation is required as a cofactor.

Its subcellular location is the cytoplasm. The protein localises to the perinuclear region. It catalyses the reaction (5Z,8Z,11Z,14Z)-eicosatetraenoate + O2 = (12R)-hydroperoxy-(5Z,8Z,10E,14Z)-eicosatetraenoate. The catalysed reaction is N-[omega-(9Z,12Z)-octadecadienoyloxy]acyl-beta-D-glucosyl-(1&lt;-&gt;1)-octadecasphing-4E-enine + O2 = N-[omega-(9R)-hydroperoxy-(10E,12Z)-octadecadienoyloxy]acyl-beta-D-glucosyl-(1&lt;-&gt;1)-octadecasphing-4E-enine. It carries out the reaction a N-[omega-(9Z,12Z)-octadecadienoyloxy]-acylsphin-4E-enine + O2 = a N-[omega-(9R)-hydroperoxy-(10E,12Z)-octadecadienoyloxy]-acylsphin-4E-enine. The enzyme catalyses (6Z,9Z,12Z)-octadecatrienoate + O2 = 10-hydroperoxy-(6Z,8E,12Z)-octadecatrienoate. It catalyses the reaction (4Z,7Z,10Z,13Z,16Z,19Z)-docosahexaenoate + O2 = 14-hydroperoxy-(4Z,7Z,10Z,12E,16Z,19Z)-docosahexaenoate. The catalysed reaction is (8Z,11Z,14Z)-eicosatrienoate + O2 = (8Z,10E,14Z)-12-hydroperoxyeicosatrienoate. It carries out the reaction (5Z,8Z,11Z,14Z,17Z)-eicosapentaenoate + O2 = (5Z,7Z,8Z,10E,14Z,17Z)-12-hydroperoxyeicosapentaenoate. The enzyme catalyses (6Z,9Z,12Z)-octadecatrienoate + O2 = 10R-hydroperoxy-(6Z,8E,12Z)-octadecatrienoate. It catalyses the reaction 1-O-methyl-(5Z,8Z,11Z,14Z)-eicosatetraenoate + O2 = 1-O-methyl (5Z,8Z,10E,12R,14Z)-hydroperoxyiecosatetraenoate. The catalysed reaction is 1-O-methyl-(5Z,8Z,11Z,14Z)-eicosatetraenoate + O2 = 1-O-methyl-8-hydroperoxy-(5Z,9E,11Z,14Z)-eicosatetraenoate. It carries out the reaction 1-O-methyl-(5Z,8Z,11Z,14Z)-eicosatetraenoate + O2 = 1-O-methyl-(8R)-hydroperoxy-(5Z,9E,11Z,14Z)-eicosatrienoate. The enzyme catalyses 1-O-methyl-(9Z,12Z)-octadecadienoate + O2 = 1-O-methyl-(9R)-hydroperoxy-(10E,12Z)-octadecadienoate. It catalyses the reaction 1-O-methyl-20-hydroxy-(5Z,8Z,11Z,14Z)-eicosatetraenoate + O2 = 1-O-methyl-8-hydroperoxy-20-hydroxy-(5Z,9E,11Z,14Z)-eicosatetraenoate. The catalysed reaction is 1-O-methyl-20-hydroxy-(5Z,8Z,11Z,14Z)-eicosatetraenoate + O2 = 1-O-methyl-12-hydroperoxy-20-hydroxy-(5Z,8Z,10E,14Z)-eicosatetraenoate. It carries out the reaction 1-O-methyl-20-hydroxy-(5Z,8Z,11Z,14Z)-eicosatetraenoate + O2 = 1-O-methyl-9-hydroperoxy-20-hydroxy-(5Z,7E,11Z,14Z)-eicosatetraenoate. The enzyme catalyses 1-O-methyl-(9Z,12Z)-octadecadienoate + O2 = 1-O-methyl-(13S)-hydroperoxy-(9Z,11E)-octadecadienoate. It functions in the pathway lipid metabolism; hydroperoxy eicosatetraenoic acid biosynthesis. The protein operates within lipid metabolism; sphingolipid metabolism. With respect to regulation, increased by calcium. In terms of biological role, catalyzes the regio and stereo-specific incorporation of a single molecule of dioxygen into free and esterified polyunsaturated fatty acids generating lipid hydroperoxides that can be further reduced to the corresponding hydroxy species. In the skin, acts upstream of ALOXE3 on the lineolate moiety of esterified omega-hydroxyacyl-sphingosine (EOS) ceramides to produce an epoxy-ketone derivative, a crucial step in the conjugation of omega-hydroxyceramide to membrane proteins. Therefore plays a crucial role in the synthesis of corneocytes lipid envelope and the establishment of the skin barrier to water loss. May also play a role in the regulation of the expression of airway mucins. The polypeptide is Arachidonate 12-lipoxygenase, 12R-type (Rattus norvegicus (Rat)).